The sequence spans 107 residues: DNA polymerase delta subunit 4 (107 aa).

A PCNA-interaction protein motif (PIP box) motif is present at residues Met1–Arg16. The segment at Met1–Ala44 is disordered. Basic and acidic residues predominate over residues Lys15–Leu28.

The protein belongs to the DNA polymerase delta subunit 4 family. In terms of assembly, component of the tetrameric DNA polymerase delta complex (Pol-delta4), which consists of POLD1/p125, POLD2/p50, POLD3/p66/p68 and POLD4/p12, with POLD1 bearing DNA polymerase and 3' to 5' proofreading exonuclease activities. Within this complex, directly interacts with POLD1 and POLD2. Directly interacts with PCNA, as do POLD1 and POLD3; this interaction stimulates Pol-delta4 polymerase activity. As POLD1 and POLD2, directly interacts with WRNIP1; this interaction stimulates DNA polymerase delta-mediated DNA synthesis, independently of the presence of PCNA. This stimulation may be due predominantly to an increase of initiation frequency and also to increased processivity. Upon genotoxic stress induced by DNA damaging agents or by replication stress, POLD4 is proteolytically degraded and Pol-delta4 is converted into a trimeric form of the complex (Pol-delta3) which has an increased proofreading activity. The DNA polymerase delta complex interacts with POLDIP2; this interaction is probably mediated through direct binding to POLD2. Ubiquitinated; undergoes 'Lys-48'-linked ubiquitination in response to UV irradiation, leading to proteasomal degradation. This modification is partly mediated by RNF8 and by the DCX(DTL) E3 ubiquitin ligase complex (also called CRL4(CDT2)). Efficient degradation requires the presence of PCNA and is required for the inhibition of fork progression after DNA damage.

Its subcellular location is the nucleus. Its function is as follows. As a component of the tetrameric DNA polymerase delta complex (Pol-delta4), plays a role in high fidelity genome replication and repair. Within this complex, increases the rate of DNA synthesis and decreases fidelity by regulating POLD1 polymerase and proofreading 3' to 5' exonuclease activity. Pol-delta4 participates in Okazaki fragment processing, through both the short flap pathway, as well as a nick translation system. Under conditions of DNA replication stress, required for the repair of broken replication forks through break-induced replication (BIR), a mechanism that may induce segmental genomic duplications of up to 200 kb. Involved in Pol-delta4 translesion synthesis (TLS) of templates carrying O6-methylguanine or abasic sites. Its degradation in response to DNA damage is required for the inhibition of fork progression and cell survival. The chain is DNA polymerase delta subunit 4 (POLD4) from Homo sapiens (Human).